We begin with the raw amino-acid sequence, 552 residues long: Non-structural protein NS1 (552 aa).

The sequence is that of Non-structural protein NS1 (Segment-5) from Bluetongue virus 1 (isolate South Africa) (BTV 1).